We begin with the raw amino-acid sequence, 208 residues long: Protein IncB (208 aa).

This protein is thought to be cis acting and to contain the putative attachment site on the DNA for the cellular partition apparatus. In Escherichia coli, this protein is Protein IncB (incB).